The sequence spans 1074 residues: ADAMTS-like protein 4 (1074 aa).

An N-terminal signal peptide occupies residues methionine 1–aspartate 24. Residues glycine 48–glutamate 93 enclose the TSP type-1 1 domain. The interval glutamine 77–leucine 342 is disordered. The span at arginine 103 to arginine 119 shows a compositional bias: polar residues. Residues leucine 132–isoleucine 152 are compositionally biased toward basic and acidic residues. The segment covering alanine 206–proline 226 has biased composition (polar residues). Gly residues predominate over residues glycine 310–proline 323. An N-linked (GlcNAc...) (complex) asparagine glycan is attached at asparagine 490. 5 consecutive TSP type-1 domains span residues cysteine 723–leucine 782, cysteine 783–threonine 842, tryptophan 845–glutamate 909, arginine 910–alanine 969, and cysteine 970–serine 1026. Asparagine 773 carries N-linked (GlcNAc...) asparagine glycosylation. In terms of domain architecture, PLAC spans proline 1029–leucine 1066.

Interacts with CTSB. Interacts with FBN1. Post-translationally, N-glycosylated. Can be O-fucosylated by POFUT2 on a serine or a threonine residue found within the consensus sequence C1-X(2)-(S/T)-C2-G of the TSP type-1 repeat domains where C1 and C2 are the first and second cysteine residue of the repeat, respectively. Fucosylated repeats can then be further glycosylated by the addition of a beta-1,3-glucose residue by the glucosyltransferase, B3GALTL. Fucosylation mediates the efficient secretion of ADAMTS family members. Can also be C-glycosylated with one or two mannose molecules on tryptophan residues within the consensus sequence W-X-X-W of the TPRs. N- and C-glycosylations can also facilitate secretion. As to expression, expressed in colon, heart, leukocyte, liver, lung, skeletal muscle, spleen, testis and placenta. Weaker expression in bone marrow, brain tissue, kidney and pancreas. Expression studies in fetal tissues reveal strong expression in heart, kidney, liver, lung and skeletal muscle, but weaker expression in fetal brain and skin.

It is found in the secreted. Its subcellular location is the extracellular space. The protein localises to the extracellular matrix. Its function is as follows. Positive regulation of apoptosis. May facilitate FBN1 microfibril biogenesis. This chain is ADAMTS-like protein 4 (ADAMTSL4), found in Homo sapiens (Human).